Reading from the N-terminus, the 319-residue chain is Ornithine carbamoyltransferase (319 aa).

Carbamoyl phosphate is bound by residues 55 to 58 (STRT), Gln82, Arg106, and 133 to 136 (HPCQ). Residues Asn171, Asp234, and 238–239 (SM) each bind L-ornithine. Carbamoyl phosphate-binding positions include 274–275 (CL) and Arg302.

The protein belongs to the aspartate/ornithine carbamoyltransferase superfamily. OTCase family.

Its subcellular location is the cytoplasm. It carries out the reaction carbamoyl phosphate + L-ornithine = L-citrulline + phosphate + H(+). Its pathway is amino-acid biosynthesis; L-arginine biosynthesis; L-arginine from L-ornithine and carbamoyl phosphate: step 1/3. Reversibly catalyzes the transfer of the carbamoyl group from carbamoyl phosphate (CP) to the N(epsilon) atom of ornithine (ORN) to produce L-citrulline. This chain is Ornithine carbamoyltransferase (argF), found in Corynebacterium glutamicum (strain ATCC 13032 / DSM 20300 / JCM 1318 / BCRC 11384 / CCUG 27702 / LMG 3730 / NBRC 12168 / NCIMB 10025 / NRRL B-2784 / 534).